Here is a 480-residue protein sequence, read N- to C-terminus: Beta-glucosidase A (480 aa).

Catalysis depends on Glu-177, which acts as the Proton donor. The active-site Nucleophile is the Glu-378.

The protein belongs to the glycosyl hydrolase 1 family.

It catalyses the reaction Hydrolysis of terminal, non-reducing beta-D-glucosyl residues with release of beta-D-glucose.. In Enterobacter agglomerans (Erwinia herbicola), this protein is Beta-glucosidase A (bglA).